We begin with the raw amino-acid sequence, 820 residues long: Ribosome biogenesis protein ERB1 (820 aa).

A disordered region spans residues 1–111 (MVRSRSNSVK…SDAGDDEVDP (111 aa)). Positions 9–19 (VKKDLKRKVDE) are enriched in basic and acidic residues. Residues 20–48 (PVDVQDEFDVEGLIDEGDSDDEDEAEQEV) show a composition bias toward acidic residues. Basic and acidic residues predominate over residues 53 to 64 (VTKDKKNTSKTE). Positions 65–110 (NEEDADDESDSDAELEALIGEEEDLSGSELEDELAYFSDAGDDEVD) are enriched in acidic residues. The segment at 282–395 (RFIPSKHEAK…LRHVPGYSES (114 aa)) is required for interaction with NOP7. The segment at 395–431 (SVRERFERSLDLYLAPRVRKNKLNIDPDSLIPDLPSP) is required for interaction with YTM1. WD repeat units lie at residues 447–486 (GHKGKVRAISVDPSGEFLATGGDDGTLRVWEVLTGRELYR) and 495–535 (AQDD…FDIE). The tract at residues 545–585 (GWGFAEGGREQQDIDTKGLDDDADSDSDDETGHVKKKSPPA) is disordered. The span at 551–564 (GGREQQDIDTKGLD) shows a compositional bias: basic and acidic residues. 5 WD repeats span residues 604–646 (TATK…SQSP), 649–687 (KSKGIVQDAMFHPFRPHLYVATQRYVRIYDLAKQVMAKK), 690–729 (PGARWVSSLDIHPRGDNVILSSFDKRLLWHDLDLSDKPYK), 733–773 (YHEK…DMMT), and 789–820 (KSGLGILRVEWHPREAWLFSAAADGTAKLWTT).

The protein belongs to the WD repeat BOP1/ERB1 family. In terms of assembly, component of the NOP7 complex, composed of ERB1, NOP7 and YTM1. The complex is held together by ERB1, which interacts with NOP7 via its N-terminal domain and with YTM1 via a high-affinity interaction between the seven-bladed beta-propeller domains of the 2 proteins. The NOP7 complex associates with the 66S pre-ribosome.

It localises to the nucleus. It is found in the nucleolus. The protein localises to the nucleoplasm. Component of the NOP7 complex, which is required for maturation of the 25S and 5.8S ribosomal RNAs and formation of the 60S ribosome. This Yarrowia lipolytica (strain CLIB 122 / E 150) (Yeast) protein is Ribosome biogenesis protein ERB1.